We begin with the raw amino-acid sequence, 200 residues long: Ras-related protein Rab-10 (200 aa).

The GTP site is built by Ser18, Gly19, Val20, Gly21, Lys22, Thr23, Cys24, Asn35, Thr36, Ser40, and Thr41. Mg(2+) is bound at residue Thr23. Short sequence motifs (switch) lie at residues 32-46 (DAFN…GIDF) and 64-81 (DTAG…YYRG). Thr41 and Asp64 together coordinate Mg(2+). Gly67 is a GTP binding site. Thr73 carries the post-translational modification Phosphothreonine; by LRRK2. Lys102 carries the post-translational modification N6-acetyllysine. Lys102 participates in a covalent cross-link: Glycyl lysine isopeptide (Lys-Gly) (interchain with G-Cter in ubiquitin). Asn122, Lys123, Asp125, and Met126 together coordinate GTP. Residue Lys136 forms a Glycyl lysine isopeptide (Lys-Gly) (interchain with G-Cter in ubiquitin) linkage. 3 residues coordinate GTP: Ser152, Ala153, and Lys154. A Glycyl lysine isopeptide (Lys-Gly) (interchain with G-Cter in ubiquitin) cross-link involves residue Lys154. Residues Cys199 and Cys200 are each lipidated (S-geranylgeranyl cysteine).

Belongs to the small GTPase superfamily. Rab family. As to quaternary structure, interacts with MYO5A; mediates the transport to the plasma membrane of SLC2A4/GLUT4 storage vesicles. Interacts with GDI1 and with GDI2; negatively regulates RAB10 association with membranes and activation. Interacts (GDP-bound form) with LLGL1; the interaction is direct and promotes RAB10 association with membranes and activation through competition with the Rab inhibitor GDI1. Interacts with EXOC4; probably associates with the exocyst. Interacts (GTP-bound form) with MICALCL, MICAL1, MICAL3, EHBP1 and EHBP1L1; at least in case of MICAL1 two molecules of RAB10 can bind to one molecule of MICAL1. Interacts with TBC1D13. Interacts with SEC16A. Interacts with CHM and CHML. Interacts with LRRK2; interaction facilitates phosphorylation of Thr-73. Interacts (when phosphorylated on Thr-73) with RILPL1 and RILPL2. Interacts with TBC1D21. Interacts with MARCKS. It depends on Mg(2+) as a cofactor. Post-translationally, ubiquitinated upon Legionella pneumophila infection. Ubiquitination does not lead to proteasomal degradation. In terms of processing, phosphorylation of Thr-73 in the switch II region by LRRK2 prevents the association of dRAB regulatory proteins, including CHM, CHML and RAB GDP dissociation inhibitors GDI1 and GDI2. Phosphorylation of Thr-73 by LRRK2 is stimulated by RAB29 and RAB32. Phosphorylation by LRRK2 is required for localization to stressed lysosomes. Expressed in the hippocampus. Expressed in neutrophils (at protein level). Expressed in the testis (at protein level).

The protein resides in the cytoplasmic vesicle membrane. Its subcellular location is the golgi apparatus membrane. It is found in the golgi apparatus. The protein localises to the trans-Golgi network membrane. It localises to the endosome membrane. The protein resides in the recycling endosome membrane. Its subcellular location is the cytoplasmic vesicle. It is found in the phagosome membrane. The protein localises to the cytoplasm. It localises to the cytoskeleton. The protein resides in the cilium basal body. Its subcellular location is the endoplasmic reticulum membrane. It is found in the perinuclear region. The protein localises to the lysosome. The enzyme catalyses GTP + H2O = GDP + phosphate + H(+). Regulated by guanine nucleotide exchange factors (GEFs) DENND4C and RABIF which promote the exchange of bound GDP for free GTP. Regulated by GTPase activating proteins (GAPs) including TBC1D21 which increase the GTP hydrolysis activity. Inhibited by GDP dissociation inhibitors GDI1 and GDI2 which prevent Rab-GDP dissociation. In terms of biological role, the small GTPases Rab are key regulators of intracellular membrane trafficking, from the formation of transport vesicles to their fusion with membranes. Rabs cycle between an inactive GDP-bound form and an active GTP-bound form that is able to recruit to membranes different set of downstream effectors directly responsible for vesicle formation, movement, tethering and fusion. That Rab is mainly involved in the biosynthetic transport of proteins from the Golgi to the plasma membrane. Regulates, for instance, SLC2A4/GLUT4 glucose transporter-enriched vesicles delivery to the plasma membrane. In parallel, it regulates the transport of TLR4, a toll-like receptor to the plasma membrane and therefore may be important for innate immune response. Also plays a specific role in asymmetric protein transport to the plasma membrane. In neurons, it is involved in axonogenesis through regulation of vesicular membrane trafficking toward the axonal plasma membrane. In epithelial cells, it regulates transport from the Golgi to the basolateral membrane. May play a role in the basolateral recycling pathway and in phagosome maturation. May play a role in endoplasmic reticulum dynamics and morphology controlling tubulation along microtubules and tubules fusion. Together with LRRK2, RAB8A, and RILPL1, it regulates ciliogenesis. When phosphorylated by LRRK2 on Thr-73, binds RILPL1 and inhibits ciliogenesis. Participates in the export of a subset of neosynthesized proteins through a Rab8-Rab10-Rab11-dependent endososomal export route. Targeted to and stabilized on stressed lysosomes through LRRK2 phosphorylation where it promotes the extracellular release of lysosomal content through EHBP1 and EHNP1L1 effector proteins. Functionally, (Microbial infection) Upon Legionella pneumophila infection promotes endoplasmic reticulum recruitment and bacterial replication. Plays a role in remodeling the Legionella-containing vacuole (LCV) into an endoplasmic reticulum-like vacuole. This Homo sapiens (Human) protein is Ras-related protein Rab-10.